The primary structure comprises 167 residues: Large ribosomal subunit protein uL22 (167 aa).

A disordered region spans residues 120–167 (GSTATTVEDEAPKAKGAKGAKAKKAPAKKAAAKKAPAKKFAGKKTAKR). The segment covering 134–167 (KGAKGAKAKKAPAKKAAAKKAPAKKFAGKKTAKR) has biased composition (basic residues).

The protein belongs to the universal ribosomal protein uL22 family. As to quaternary structure, part of the 50S ribosomal subunit.

In terms of biological role, this protein binds specifically to 23S rRNA; its binding is stimulated by other ribosomal proteins, e.g. L4, L17, and L20. It is important during the early stages of 50S assembly. It makes multiple contacts with different domains of the 23S rRNA in the assembled 50S subunit and ribosome. Its function is as follows. The globular domain of the protein is located near the polypeptide exit tunnel on the outside of the subunit, while an extended beta-hairpin is found that lines the wall of the exit tunnel in the center of the 70S ribosome. The chain is Large ribosomal subunit protein uL22 from Koribacter versatilis (strain Ellin345).